A 155-amino-acid polypeptide reads, in one-letter code: Endoribonuclease YbeY (155 aa).

Histidine 120, histidine 124, and histidine 130 together coordinate Zn(2+).

This sequence belongs to the endoribonuclease YbeY family. It depends on Zn(2+) as a cofactor.

The protein localises to the cytoplasm. In terms of biological role, single strand-specific metallo-endoribonuclease involved in late-stage 70S ribosome quality control and in maturation of the 3' terminus of the 16S rRNA. This chain is Endoribonuclease YbeY, found in Staphylococcus epidermidis (strain ATCC 12228 / FDA PCI 1200).